The chain runs to 312 residues: Ribonuclease HIII (312 aa).

Residues 95 to 311 enclose the RNase H type-2 domain; it reads FNCIGSDEAG…REKAQKILKP (217 aa). A divalent metal cation contacts are provided by aspartate 101, glutamate 102, and aspartate 206.

Belongs to the RNase HII family. RnhC subfamily. The cofactor is Mn(2+). Mg(2+) serves as cofactor.

It is found in the cytoplasm. The enzyme catalyses Endonucleolytic cleavage to 5'-phosphomonoester.. In terms of biological role, endonuclease that specifically degrades the RNA of RNA-DNA hybrids. This is Ribonuclease HIII from Staphylococcus aureus (strain USA300).